The chain runs to 151 residues: Snaclec 3 (151 aa).

Residues 1–23 (MGRLVFVSFSLLVVFLSLSGTAA) form the signal peptide. 3 cysteine pairs are disulfide-bonded: C25–C36, C53–C149, and C125–C141. Positions 32–150 (YEGHCYKPFN…CGEINPFVCK (119 aa)) constitute a C-type lectin domain.

The protein belongs to the snaclec family. Heterodimer; disulfide-linked. In terms of tissue distribution, expressed by the venom gland.

The protein localises to the secreted. Interferes with one step of hemostasis (modulation of platelet aggregation, or coagulation cascade, for example). This chain is Snaclec 3, found in Sistrurus catenatus edwardsii (Desert massasauga).